The following is a 213-amino-acid chain: Ras-related protein Rab-19 (213 aa).

The GTP site is built by S24, V26, G27, K28, T29, C30, D42, and T47. A Mg(2+)-binding site is contributed by T29. The Switch 1 signature appears at S37 to F52. Positions 47 and 70 each coordinate Mg(2+). Positions A72–S87 match the Switch 2 motif. Positions 73, 128, 129, 131, 159, 160, and 161 each coordinate GTP. Residues C211 and C213 are each lipidated (S-geranylgeranyl cysteine). C213 carries the cysteine methyl ester modification.

The protein belongs to the small GTPase superfamily. Rab family. It depends on Mg(2+) as a cofactor.

It is found in the cell membrane. The enzyme catalyses GTP + H2O = GDP + phosphate + H(+). Its activity is regulated as follows. Regulated by guanine nucleotide exchange factors (GEFs) which promote the exchange of bound GDP for free GTP. Regulated by GTPase activating proteins (GAPs) which increase the GTP hydrolysis activity. Inhibited by GDP dissociation inhibitors (GDIs). The small GTPases Rab are key regulators of intracellular membrane trafficking, from the formation of transport vesicles to their fusion with membranes. Rabs cycle between an inactive GDP-bound form and an active GTP-bound form that is able to recruit to membranes different set of downstream effectors directly responsible for vesicle formation, movement, tethering and fusion. The sequence is that of Ras-related protein Rab-19 (rab19) from Xenopus laevis (African clawed frog).